The chain runs to 215 residues: MGQKINPTGFRLSVLKNWSSRWYANTKKFSVFLNEDINVRQYLQKRLAHASVGSIIIERPSRNAKITIHTSRPGVVIGKKGEDIEILRKNVEKLMNVPVHINIEEIRKPEIDAQLIAASITQQLEKRIMFRRAMKRAIQNAMRLGAQGIKIMSSGRLNGIEIARTEWYREGRVPLHTLRAEVDYGTSEAKTTYGVIGVKVWVFKGEQLSVRDRQN.

In terms of domain architecture, KH type-2 spans 39 to 107 (VRQYLQKRLA…PVHINIEEIR (69 aa)).

The protein belongs to the universal ribosomal protein uS3 family. Part of the 30S ribosomal subunit. Forms a tight complex with proteins S10 and S14.

Its function is as follows. Binds the lower part of the 30S subunit head. Binds mRNA in the 70S ribosome, positioning it for translation. The sequence is that of Small ribosomal subunit protein uS3 from Nitrosomonas eutropha (strain DSM 101675 / C91 / Nm57).